The following is a 325-amino-acid chain: Aquaporin-8 (325 aa).

The Cytoplasmic segment spans residues 1–10; the sequence is MALRSPARDY. A helical membrane pass occupies residues 11–31; the sequence is LVSMIGELVGTFLFLFFAFAA. At 32–52 the chain is on the extracellular side; it reads AQTANQPNGTKPLTPNATDTS. N-linked (GlcNAc...) asparagine glycans are attached at residues Asn-39 and Asn-47. The chain crosses the membrane as a helical span at residues 53–73; it reads KLLYIALAFGASLAANVWVFF. Over 74–100 the chain is Cytoplasmic; the sequence is RVSGGQFNPAVTLALVLIRAVSPTKAL. An NPA 1 motif is present at residues 81–83; the sequence is NPA. Residues 101 to 121 form a helical membrane-spanning segment; sequence ILIPAQLVGGSLAAAAVKGII. Topologically, residues 122–140 are extracellular; it reads PGDDILFAVSLGPGVANVQ. A helical transmembrane segment spans residues 141 to 161; sequence GLFIELLLTFMLVFTILMLVA. At 162–167 the chain is on the cytoplasmic side; sequence EKTKST. A helical transmembrane segment spans residues 168 to 188; the sequence is FVAPIGIGFSLFIGHLVGIFW. Over 189–212 the chain is Extracellular; the sequence is TGAGINPARAFSPALIQASFPSYH. The short motif at 194 to 196 is the NPA 2 element; that stretch reads NPA. The chain crosses the membrane as a helical span at residues 213 to 233; sequence WIYWLGPALGSFLAAGLYLGL. The Cytoplasmic segment spans residues 234 to 325; the sequence is KEMKYELVGG…GSPDSTDLPT (92 aa). 2 disordered regions span residues 279 to 298 and 305 to 325; these read LGQF…LERG and EDDP…DLPT. Over residues 286-298 the composition is skewed to basic and acidic residues; sequence TEGHRSPVDLERG.

It belongs to the MIP/aquaporin (TC 1.A.8) family.

Its subcellular location is the cell membrane. It catalyses the reaction H2O2(out) = H2O2(in). The enzyme catalyses H2O(in) = H2O(out). Its function is as follows. Plasma membrane water channel that regulates the reactive oxygen species (ROS)-signaling pathway through its capacity to act as a membrane channel for hydrogen peroxide uptake. Required for the formation of infection structures and infection, especially on host leaves where it is essential for the penetration into the host. Regulates the expression of proteins related to redox-regulation and intracellular signal transduction and plays a role in the distribution of mitochondria in the hyphae. The sequence is that of Aquaporin-8 from Botryotinia fuckeliana (strain B05.10) (Noble rot fungus).